Here is a 188-residue protein sequence, read N- to C-terminus: dCTP deaminase (188 aa).

Residues 111–116 (KSTYAR), 135–137 (TLE), glutamine 156, tyrosine 170, and glutamine 180 contribute to the dCTP site. Residue glutamate 137 is the Proton donor/acceptor of the active site.

This sequence belongs to the dCTP deaminase family. In terms of assembly, homotrimer.

The catalysed reaction is dCTP + H2O + H(+) = dUTP + NH4(+). It participates in pyrimidine metabolism; dUMP biosynthesis; dUMP from dCTP (dUTP route): step 1/2. Catalyzes the deamination of dCTP to dUTP. In Francisella tularensis subsp. tularensis (strain FSC 198), this protein is dCTP deaminase.